Reading from the N-terminus, the 346-residue chain is Probable RNA methyltransferase Pmen_2155 (346 aa).

Glutamate 91 serves as the catalytic Proton acceptor. Residues 94–320 enclose the Radical SAM core domain; the sequence is LLPRDGLCIS…TKVRNSAGQD (227 aa). Cysteines 101 and 325 form a disulfide. [4Fe-4S] cluster contacts are provided by cysteine 108, cysteine 112, and cysteine 115. S-adenosyl-L-methionine contacts are provided by residues 153 to 154, serine 183, 206 to 208, and asparagine 282; these read GE and SLH. The S-methylcysteine intermediate role is filled by cysteine 325.

This sequence belongs to the radical SAM superfamily. RlmN family. [4Fe-4S] cluster is required as a cofactor.

The protein resides in the cytoplasm. The polypeptide is Probable RNA methyltransferase Pmen_2155 (Ectopseudomonas mendocina (strain ymp) (Pseudomonas mendocina)).